Here is an 876-residue protein sequence, read N- to C-terminus: Alanine--tRNA ligase (876 aa).

Residues His564, His568, Cys666, and His670 each contribute to the Zn(2+) site.

It belongs to the class-II aminoacyl-tRNA synthetase family. As to quaternary structure, homotetramer. The cofactor is Zn(2+).

Its subcellular location is the cytoplasm. The enzyme catalyses tRNA(Ala) + L-alanine + ATP = L-alanyl-tRNA(Ala) + AMP + diphosphate. Functionally, catalyzes the attachment of alanine to tRNA(Ala) in a two-step reaction: alanine is first activated by ATP to form Ala-AMP and then transferred to the acceptor end of tRNA(Ala). Also edits incorrectly charged Ser-tRNA(Ala) and Gly-tRNA(Ala) via its editing domain. This Salmonella choleraesuis (strain SC-B67) protein is Alanine--tRNA ligase.